A 537-amino-acid chain; its full sequence is Chaperonin GroEL 2 (537 aa).

ATP is bound by residues 29–32 (TLGP), 86–90 (DGTTT), Gly-413, 477–479 (NAA), and Asp-493.

Belongs to the chaperonin (HSP60) family. Forms a cylinder of 14 subunits composed of two heptameric rings stacked back-to-back. Interacts with the co-chaperonin GroES.

Its subcellular location is the cytoplasm. The catalysed reaction is ATP + H2O + a folded polypeptide = ADP + phosphate + an unfolded polypeptide.. Together with its co-chaperonin GroES, plays an essential role in assisting protein folding. The GroEL-GroES system forms a nano-cage that allows encapsulation of the non-native substrate proteins and provides a physical environment optimized to promote and accelerate protein folding. The protein is Chaperonin GroEL 2 of Rhodococcus jostii (strain RHA1).